A 364-amino-acid polypeptide reads, in one-letter code: Endoglucanase A (364 aa).

The active-site Proton donor is the Glu169. The active-site Nucleophile is the Glu293.

It belongs to the glycosyl hydrolase 5 (cellulase A) family.

The protein localises to the cytoplasm. The enzyme catalyses Endohydrolysis of (1-&gt;4)-beta-D-glucosidic linkages in cellulose, lichenin and cereal beta-D-glucans.. It carries out the reaction Endohydrolysis of (1-&gt;4)-beta-D-xylosidic linkages in xylans.. In terms of biological role, hydrolyzes both carboxymethylcellulose and xylan. Probably has a role in hydrolyzing oligosaccharides derived from cellulose, which are transported across the cell wall. The protein is Endoglucanase A (celA) of Ruminococcus albus.